Here is a 168-residue protein sequence, read N- to C-terminus: Phospholipase A and acyltransferase 1 (168 aa).

The Cytoplasmic segment spans residues 1-138 (MAFNDCFSLN…GEGVSEQANR (138 aa)). Positions 20–135 (LIEVFRPGYQ…LRYGEGVSEQ (116 aa)) constitute an LRAT domain. His-30 is an active-site residue. Cys-119 (acyl-thioester intermediate) is an active-site residue. A helical membrane pass occupies residues 139 to 159 (AISTVEFVTAAVGVFSFLGLF). At 160 to 168 (PKGQRAKYY) the chain is on the lumenal side.

It belongs to the H-rev107 family. Abundantly expressed in testis, skeletal muscle, brain, and heart. In terms of tissue distribution, highly expressed in the testis, skeletal muscle, brain, heart, and thyroid.

It localises to the membrane. Its subcellular location is the cytoplasm. The protein resides in the nucleus. The enzyme catalyses a 1,2-diacyl-sn-glycero-3-phosphocholine + H2O = a 1-acyl-sn-glycero-3-phosphocholine + a fatty acid + H(+). It carries out the reaction a 1,2-diacyl-sn-glycero-3-phosphocholine + H2O = a 2-acyl-sn-glycero-3-phosphocholine + a fatty acid + H(+). It catalyses the reaction 1,2-dihexadecanoyl-sn-glycero-3-phosphocholine + H2O = 2-hexadecanoyl-sn-glycero-3-phosphocholine + hexadecanoate + H(+). The catalysed reaction is 1,2-dihexadecanoyl-sn-glycero-3-phosphocholine + H2O = 1-hexadecanoyl-sn-glycero-3-phosphocholine + hexadecanoate + H(+). The enzyme catalyses 1-hexadecanoyl-2-(5Z,8Z,11Z,14Z-eicosatetraenoyl)-sn-glycero-3-phosphoethanolamine + H2O = 2-(5Z,8Z,11Z,14Z)-eicosatetraenoyl-sn-glycero-3-phosphoethanolamine + hexadecanoate + H(+). It carries out the reaction 1-hexadecanoyl-2-(5Z,8Z,11Z,14Z-eicosatetraenoyl)-sn-glycero-3-phosphoethanolamine + H2O = 1-hexadecanoyl-sn-glycero-3-phosphoethanolamine + (5Z,8Z,11Z,14Z)-eicosatetraenoate + H(+). It catalyses the reaction 1,2-di-(9Z-octadecenoyl)-sn-glycero-3-phosphoethanolamine + 1,2-dihexadecanoyl-sn-glycero-3-phosphocholine = hexadecanoyl-sn-glycero-3-phosphocholine + N-hexadecanoyl-1,2-di-(9Z-octadecenoyl)-sn-glycero-3-phosphoethanolamine + H(+). The catalysed reaction is 1,2-dihexadecanoyl-sn-glycero-3-phosphocholine + a 2-acyl-sn-glycero-3-phosphocholine = a 1-hexadecanoyl-2-acyl-sn-glycero-3-phosphocholine + 2-hexadecanoyl-sn-glycero-3-phosphocholine. In terms of biological role, exhibits both phospholipase A1/2 and acyltransferase activities. Shows phospholipase A1 (PLA1) and A2 (PLA2) activity, catalyzing the calcium-independent release of fatty acids from the sn-1 or sn-2 position of glycerophospholipids. Shows O-acyltransferase activity, catalyzing the transfer of a fatty acyl group from glycerophospholipid to the hydroxyl group of lysophospholipid. Shows N-acyltransferase activity, catalyzing the calcium-independent transfer of a fatty acyl group at the sn-1 position of phosphatidylcholine (PC) and other glycerophospholipids to the primary amine of phosphatidylethanolamine (PE), forming N-acylphosphatidylethanolamine (NAPE) which serves as precursor for N-acylethanolamines (NAEs). The sequence is that of Phospholipase A and acyltransferase 1 from Homo sapiens (Human).